Reading from the N-terminus, the 561-residue chain is uncharacterized protein (561 aa).

Low complexity predominate over residues 314–323 (ANNGSGDSSS). The disordered stretch occupies residues 314–366 (ANNGSGDSSSTALNNESPNTTPKSRTFFSPKGHRRNSSHVSSLTSRSTKKPIT). Over residues 324-340 (TALNNESPNTTPKSRTF) the composition is skewed to polar residues. Phosphoserine is present on serine 514.

Its subcellular location is the cytoplasm. This is an uncharacterized protein from Saccharomyces cerevisiae (strain ATCC 204508 / S288c) (Baker's yeast).